A 609-amino-acid polypeptide reads, in one-letter code: Proline--tRNA ligase (609 aa).

Belongs to the class-II aminoacyl-tRNA synthetase family. ProS type 1 subfamily. In terms of assembly, homodimer.

The protein resides in the cytoplasm. It carries out the reaction tRNA(Pro) + L-proline + ATP = L-prolyl-tRNA(Pro) + AMP + diphosphate. Catalyzes the attachment of proline to tRNA(Pro) in a two-step reaction: proline is first activated by ATP to form Pro-AMP and then transferred to the acceptor end of tRNA(Pro). As ProRS can inadvertently accommodate and process non-cognate amino acids such as alanine and cysteine, to avoid such errors it has two additional distinct editing activities against alanine. One activity is designated as 'pretransfer' editing and involves the tRNA(Pro)-independent hydrolysis of activated Ala-AMP. The other activity is designated 'posttransfer' editing and involves deacylation of mischarged Ala-tRNA(Pro). The misacylated Cys-tRNA(Pro) is not edited by ProRS. The polypeptide is Proline--tRNA ligase (Synechococcus sp. (strain JA-2-3B'a(2-13)) (Cyanobacteria bacterium Yellowstone B-Prime)).